Reading from the N-terminus, the 82-residue chain is Small ribosomal subunit protein bS16 (82 aa).

It belongs to the bacterial ribosomal protein bS16 family.

This chain is Small ribosomal subunit protein bS16, found in Enterobacter sp. (strain 638).